Consider the following 226-residue polypeptide: Protein YAE1 homolog (226 aa).

The tract at residues 45–85 (GYRDGIDAGKAVTLQQGFNQGYKKGAEVILNYGRLRGTLSA) is deca-GX3 motif; required for interaction with LTO1.

Forms a complex with LTO1.

It localises to the cytoplasm. Its subcellular location is the nucleus. Functionally, the complex LTO1:YAE1 functions as a target specific adapter that probably recruits apo-ABCE1 to the cytosolic iron-sulfur protein assembly (CIA) complex machinery. May be required for biogenesis of the large ribosomal subunit and initiation of translation. The polypeptide is Protein YAE1 homolog (Homo sapiens (Human)).